The sequence spans 257 residues: Dihydroorotate dehydrogenase B (NAD(+)), electron transfer subunit (257 aa).

The FAD-binding FR-type domain maps to 2-100; sequence ILIEDLTVVS…MGPQGNGFDI (99 aa). Residues 51–54, 68–70, and 75–76 contribute to the FAD site; these read RPIS, VYR, and GT. Residues Cys220, Cys225, Cys228, and Cys244 each contribute to the [2Fe-2S] cluster site.

It belongs to the PyrK family. As to quaternary structure, heterotetramer of 2 PyrK and 2 PyrD type B subunits. It depends on [2Fe-2S] cluster as a cofactor. Requires FAD as cofactor.

The protein operates within pyrimidine metabolism; UMP biosynthesis via de novo pathway; orotate from (S)-dihydroorotate (NAD(+) route): step 1/1. Functionally, responsible for channeling the electrons from the oxidation of dihydroorotate from the FMN redox center in the PyrD type B subunit to the ultimate electron acceptor NAD(+). In Streptococcus thermophilus (strain ATCC BAA-491 / LMD-9), this protein is Dihydroorotate dehydrogenase B (NAD(+)), electron transfer subunit.